A 73-amino-acid polypeptide reads, in one-letter code: Somatostatin-2 (73 aa).

Residues 1–45 (SAGLLTQEWSAVEDLLAQMSLPEADAQRDAEMVSTATGGGRMNQE) constitute a propeptide that is removed on maturation. Residues 23–58 (EADAQRDAEMVSTATGGGRMNQESIEPPNNLPPRER) form a disordered region. A disulfide bridge connects residues C62 and C73.

This sequence belongs to the somatostatin family.

Its subcellular location is the secreted. Its function is as follows. Somatostatin inhibits the release of somatotropin. This is Somatostatin-2 (sst2) from Platichthys flesus (European flounder).